A 304-amino-acid chain; its full sequence is Meiotically up-regulated gene 86 protein (304 aa).

Residues 1-12 (MSSNPSRSNSRS) show a composition bias toward low complexity. Residues 1–23 (MSSNPSRSNSRSKNGDLESGLKF) form a disordered region. 6 helical membrane passes run 93–113 (PAPFGLSAFAFTTFLLSLFNV), 123–143 (MVTAPAAFYGGLAQLLASMWE), 150–170 (FGGAVFGSYGCFWLSYASIFI), 188–208 (AIGLYLICWFIFTFLVLLCTV), 212–232 (LAFFSLFMSLDVCFLLLACAF), and 247–267 (VGGAFGIFSACAAWYNAMAGL).

This sequence belongs to the acetate uptake transporter (AceTr) (TC 2.A.96) family.

The protein resides in the endoplasmic reticulum membrane. It is found in the golgi apparatus. It localises to the golgi stack membrane. Its subcellular location is the vacuole membrane. In terms of biological role, has a role in meiosis. The polypeptide is Meiotically up-regulated gene 86 protein (mug86) (Schizosaccharomyces pombe (strain 972 / ATCC 24843) (Fission yeast)).